A 693-amino-acid polypeptide reads, in one-letter code: MSTPSLEKIRNIGITAHIDAGKTTTTERILYYTGVSHKIGEVHDGNTTTDYMEQERERGITITSAAVTCEWKDHRINIIDTPGHIDFNIEVNRSLRVLDGAVFIIEGVAGVQPQSETNWRLADRYNVPRVIFINKLDRTGADFYRAFDTLKEKLDIVALPLQLPIGAEDQFLGVVDLVEMKAIIWEGGELGAKFHDEPIPAELAEKAAEYRQNLLDTALAVDDAAMEEYFEKGDVDVATLKRAIKRGTIDGTFRPVLCGTAFKNKGVQPLLDSVIDYLPAPTDLPGIKVAAEEGEDEAADRRRIPAKTDAPFSGLAFKIINDKYGTLTFVRVYSGVLRSGDSVLNTTKGHKERIGRIFQMHADKRAEIKEVFAGDIAAFVGLKDTGTGDTLASQDDPVVLERMAFPVPVIDISVEPKTKEAVEKMTLGLQKLAGEDPSLRLRTDQETGQTILSGMGELHLDIIIDRLRREYNVDCNIGAPQVAYRETISKSHTEVYTHKKQSGGSGQFAEVKIIFEPLERNEGIVFENKVVGGSVPKEYIPAVDKGIRVQAETGVLAGFPTVDFKFSLIDGKYHDVDSSALAFEIAGKACFREGMKKAGPQILEPIMDVEVTTPQDHVGDVVGDLNRRRGMIQNQESSGSTVLVRAQVPLKEMFGYISHLRSMTKGRASFTMQFHHYDPVPRNVADEIMTKSA.

A tr-type G domain is found at 7-282 (EKIRNIGITA…SVIDYLPAPT (276 aa)). Residues 16–23 (AHIDAGKT), 80–84 (DTPGH), and 134–137 (NKLD) contribute to the GTP site.

It belongs to the TRAFAC class translation factor GTPase superfamily. Classic translation factor GTPase family. EF-G/EF-2 subfamily.

The protein localises to the cytoplasm. Its function is as follows. Catalyzes the GTP-dependent ribosomal translocation step during translation elongation. During this step, the ribosome changes from the pre-translocational (PRE) to the post-translocational (POST) state as the newly formed A-site-bound peptidyl-tRNA and P-site-bound deacylated tRNA move to the P and E sites, respectively. Catalyzes the coordinated movement of the two tRNA molecules, the mRNA and conformational changes in the ribosome. In Granulibacter bethesdensis (strain ATCC BAA-1260 / CGDNIH1), this protein is Elongation factor G.